We begin with the raw amino-acid sequence, 222 residues long: Tegument protein UL26 (222 aa).

It belongs to the herpesviridae US22 family. As to quaternary structure, interacts with UL25. Interacts with ISGylation machinery components ISG15, UBA7 and HERC5; these interactions inhibit global protein ISGylation. In terms of processing, ISGylated; ISGylation regulates UL26 stability and inhibits its activities to suppress NF-kappa-B signaling.

Its subcellular location is the virion tegument. The protein resides in the host nucleus. In terms of biological role, plays a role in the inhibition of host NF-kappa-B. This inhibition affects both the canonical and the non-canonical pathways. Blocks the induction of host IKK phosphorylation. May also influence the normal phosphorylation state of several tegument proteins including pp28 in virions. Also suppresses virus-induced ISGylation independent of its own ISGylation. This Homo sapiens (Human) protein is Tegument protein UL26 (UL26).